Here is a 217-residue protein sequence, read N- to C-terminus: MIAAQFRIQALPTTYLFKEAQALDAFPSVLDKSSLIQRLSIILPKEEDLKFQQALDFLQVENYEAALPLLKDAWELSDKKNSDVALLYAETYIAMKKTEPAQEILNQIPLQDRDSRWHGLQAQIELQIQAADTPEIQQLQADYAKNPTAEIAIKLAVQLHQAGRNEEALTLLFGILKTDLGAQNGEVKQQFLSILSAMGNADPLTNKFRRLLYSLLY.

This is an uncharacterized protein from Haemophilus influenzae (strain ATCC 51907 / DSM 11121 / KW20 / Rd).